A 944-amino-acid chain; its full sequence is Leucine--tRNA ligase (944 aa).

The 'HIGH' region signature appears at 40 to 51; the sequence is PYPSGAGLHVGH. Residues 718 to 722 carry the 'KMSKS' region motif; it reads KMSKS. Residue K721 participates in ATP binding.

The protein belongs to the class-I aminoacyl-tRNA synthetase family.

The protein resides in the cytoplasm. The catalysed reaction is tRNA(Leu) + L-leucine + ATP = L-leucyl-tRNA(Leu) + AMP + diphosphate. In Phocaeicola vulgatus (strain ATCC 8482 / DSM 1447 / JCM 5826 / CCUG 4940 / NBRC 14291 / NCTC 11154) (Bacteroides vulgatus), this protein is Leucine--tRNA ligase.